A 61-amino-acid chain; its full sequence is Small ribosomal subunit protein uS14 (61 aa).

Zn(2+) is bound by residues C24, C27, C40, and C43.

The protein belongs to the universal ribosomal protein uS14 family. Zinc-binding uS14 subfamily. Part of the 30S ribosomal subunit. Contacts proteins S3 and S10. Requires Zn(2+) as cofactor.

Binds 16S rRNA, required for the assembly of 30S particles and may also be responsible for determining the conformation of the 16S rRNA at the A site. The sequence is that of Small ribosomal subunit protein uS14 from Syntrophus aciditrophicus (strain SB).